The primary structure comprises 201 residues: MAKNVLHTIRERGFLDGQFLIAMPGMFDTNFARTVIFVCAHSEDGAMGFILNRPQRLTFPDVLLHLQLLDPDEAIRLPSATREFQIQAGGPVETGRGFVLHSDDYLSDSSIPVSDDICLTATLDIVRAISRGEGPLKATMLLGYAGWGPGQLEAEITQNGWLTCPAQEELIFSRDLDEKYDRALALMGVSPAMLSTDSGHA.

The protein belongs to the UPF0301 (AlgH) family.

In Rhizobium meliloti (strain 1021) (Ensifer meliloti), this protein is UPF0301 protein R00917.